Consider the following 456-residue polypeptide: Equilibrative nucleoside transporter 2 (456 aa).

The Cytoplasmic portion of the chain corresponds to M1–H12. A helical membrane pass occupies residues L13–W29. At N30–N68 the chain is on the extracellular side. N-linked (GlcNAc...) asparagine glycosylation is found at N47 and N56. The chain crosses the membrane as a helical span at residues W69–P93. Residues E94 to R97 are Cytoplasmic-facing. A helical membrane pass occupies residues I98–V116. At K117–L124 the chain is on the extracellular side. Residues F125–L143 form a helical membrane-spanning segment. Over Q144–T160 the chain is Cytoplasmic. A helical transmembrane segment spans residues L161–V185. The Extracellular portion of the chain corresponds to D186–L192. Residues G193–P213 traverse the membrane as a helical segment. The Cytoplasmic segment spans residues H214–L291. S251 carries the phosphoserine modification. A helical transmembrane segment spans residues T292 to T311. At A312–K323 the chain is on the extracellular side. A helical membrane pass occupies residues W324–W342. The Cytoplasmic portion of the chain corresponds to L343 to Q359. Residues L360–C378 traverse the membrane as a helical segment. Over H379–D393 the chain is Extracellular. Residues A394–L413 form a helical membrane-spanning segment. The Cytoplasmic segment spans residues T414 to G431. Residues A432 to F452 form a helical membrane-spanning segment. The Extracellular segment spans residues K453–L456.

The protein belongs to the SLC29A/ENT transporter (TC 2.A.57) family. Expressed in squeletal muscles. Expressed in testis at the blood-brain-barrier.

Its subcellular location is the apical cell membrane. The protein resides in the basolateral cell membrane. The catalysed reaction is uridine(out) = uridine(in). It carries out the reaction inosine(in) = inosine(out). It catalyses the reaction adenosine(in) = adenosine(out). The enzyme catalyses thymidine(in) = thymidine(out). The catalysed reaction is hypoxanthine(out) = hypoxanthine(in). It carries out the reaction adenine(out) = adenine(in). It catalyses the reaction cytidine(in) = cytidine(out). The enzyme catalyses thymine(out) = thymine(in). The catalysed reaction is uracil(in) = uracil(out). It carries out the reaction guanine(out) = guanine(in). It catalyses the reaction guanosine(in) = guanosine(out). Bidirectional uniporter involved in the facilitative transport of nucleosides and nucleobases, and contributes to maintaining their cellular homeostasis. Functions as a Na(+)-independent, passive transporter. Involved in the transport of nucleosides such as inosine, adenosine, uridine, thymidine, cytidine and guanosine. Also able to transport purine nucleobases (hypoxanthine, adenine, guanine) and pyrimidine nucleobases (thymine, uracil). Involved in nucleoside transport at basolateral membrane of kidney cells, allowing liver absorption of nucleoside metabolites. Mediates apical nucleoside uptake into Sertoli cells, thereby regulating the transport of nucleosides in testis across the blood-testis-barrier. Mediates both the influx and efflux of hypoxanthine in skeletal muscle microvascular endothelial cells to control the amount of intracellular hypoxanthine available for xanthine oxidase-mediated ROS production. This is Equilibrative nucleoside transporter 2 from Rattus norvegicus (Rat).